We begin with the raw amino-acid sequence, 621 residues long: uncharacterized protein (621 aa).

The protein belongs to the chlamydial CPn_0512/CT_425/TC_0708 family.

This is an uncharacterized protein from Chlamydia muridarum (strain MoPn / Nigg).